We begin with the raw amino-acid sequence, 1020 residues long: Protein translocase subunit SecA (1020 aa).

Residues Gln-143, 161–165 (GEGKT), and Asp-661 each bind ATP. The segment at 974–1020 (SVYNASPGAENEAPLQRPVTADSKPGRNDPCPCGSGKKYKNCHGQQP) is disordered. Positions 1004, 1006, 1015, and 1016 each coordinate Zn(2+).

Belongs to the SecA family. In terms of assembly, monomer and homodimer. Part of the essential Sec protein translocation apparatus which comprises SecA, SecYEG and auxiliary proteins SecDF. Other proteins may also be involved. Zn(2+) is required as a cofactor.

The protein resides in the cell inner membrane. It is found in the cytoplasm. The enzyme catalyses ATP + H2O + cellular proteinSide 1 = ADP + phosphate + cellular proteinSide 2.. Its function is as follows. Part of the Sec protein translocase complex. Interacts with the SecYEG preprotein conducting channel. Has a central role in coupling the hydrolysis of ATP to the transfer of proteins into and across the cell membrane, serving as an ATP-driven molecular motor driving the stepwise translocation of polypeptide chains across the membrane. This Chlorobium phaeovibrioides (strain DSM 265 / 1930) (Prosthecochloris vibrioformis (strain DSM 265)) protein is Protein translocase subunit SecA.